The following is a 684-amino-acid chain: Pheromone-processing carboxypeptidase KEX1 (684 aa).

An N-terminal signal peptide occupies residues 1–18 (MVIKYLLLILVQSFVAFA). The Lumenal segment spans residues 19 to 556 (LPFTSRSDPK…NQQTSNRITR (538 aa)). An N-linked (GlcNAc...) asparagine glycan is attached at asparagine 62. Residues serine 181 and aspartate 388 contribute to the active site. Asparagine 424 and asparagine 435 each carry an N-linked (GlcNAc...) asparagine glycan. Histidine 446 is an active-site residue. Asparagine 474 is a glycosylation site (N-linked (GlcNAc...) asparagine). The disordered stretch occupies residues 494 to 549 (KQKEESESKTSPTSVTQSKTSSISAVSGKSLATSTTLDQEHSATPSAEAERAKNQQ). A compositionally biased stretch (polar residues) spans 510-538 (QSKTSSISAVSGKSLATSTTLDQEHSATP). The chain crosses the membrane as a helical span at residues 557 to 577 (LIQLLVIVVLIWGVYILYSSY). Residues 578–684 (RSRPSSIIKT…NQTNKQSVSK (107 aa)) lie on the Cytoplasmic side of the membrane. Residues 647 to 684 (MNEGITEHTDNRVDDFIIESDEEDAHDENQTNKQSVSK) form a disordered region. Positions 651–661 (ITEHTDNRVDD) are enriched in basic and acidic residues. Over residues 662–672 (FIIESDEEDAH) the composition is skewed to acidic residues.

Belongs to the peptidase S10 family.

Its subcellular location is the golgi apparatus. The protein localises to the trans-Golgi network membrane. It catalyses the reaction Preferential release of a C-terminal arginine or lysine residue.. Its function is as follows. Protease with a carboxypeptidase B-like function involved in the C-terminal processing of the lysine and arginine residues from protein precursors. Promotes cell fusion and is involved in the programmed cell death. The protein is Pheromone-processing carboxypeptidase KEX1 (KEX1) of Debaryomyces hansenii (strain ATCC 36239 / CBS 767 / BCRC 21394 / JCM 1990 / NBRC 0083 / IGC 2968) (Yeast).